The sequence spans 364 residues: Aminomethyltransferase (364 aa).

This sequence belongs to the GcvT family. In terms of assembly, the glycine cleavage system is composed of four proteins: P, T, L and H.

The enzyme catalyses N(6)-[(R)-S(8)-aminomethyldihydrolipoyl]-L-lysyl-[protein] + (6S)-5,6,7,8-tetrahydrofolate = N(6)-[(R)-dihydrolipoyl]-L-lysyl-[protein] + (6R)-5,10-methylene-5,6,7,8-tetrahydrofolate + NH4(+). In terms of biological role, the glycine cleavage system catalyzes the degradation of glycine. The polypeptide is Aminomethyltransferase (Shigella flexneri serotype 5b (strain 8401)).